The sequence spans 361 residues: uncharacterized protein (361 aa).

An N-terminal signal peptide occupies residues 1–19; sequence MNLVICVLLLSIWKNNCMT. Over 20–47 the chain is Extracellular; sequence TNQTNGSSTTGDKPVESMQTKLNYLRRN. The N-linked (GlcNAc...) asparagine glycan is linked to asparagine 24. The helical transmembrane segment at 48–68 threads the bilayer; sequence LLILVGIIIMVFVFICFCYLH. Over 69-361 the chain is Cytoplasmic; the sequence is YNCLSDDASK…QVTSEVTLND (293 aa). The span at 99-113 shows a compositional bias: polar residues; it reads AKTASQCSPETQPML. Disordered stretches follow at residues 99–184, 209–247, and 295–316; these read AKTA…KAHK, PPQLFKPLYSSHPQNEISPSKPFGPQELAKPPKHFNPKR, and QNLHVSSKVKSSSRSFRKLDSR. The span at 114–133 shows a compositional bias: low complexity; the sequence is STADKSSDSSSPERASAQSS. Polar residues predominate over residues 141 to 150; that stretch reads SSLQKPSIPN. Residues 299-308 are compositionally biased toward low complexity; sequence VSSKVKSSSR.

The protein resides in the membrane. This is an uncharacterized protein from Homo sapiens (Human).